A 188-amino-acid chain; its full sequence is Elongation factor P (188 aa).

Belongs to the elongation factor P family.

It localises to the cytoplasm. The protein operates within protein biosynthesis; polypeptide chain elongation. Functionally, involved in peptide bond synthesis. Stimulates efficient translation and peptide-bond synthesis on native or reconstituted 70S ribosomes in vitro. Probably functions indirectly by altering the affinity of the ribosome for aminoacyl-tRNA, thus increasing their reactivity as acceptors for peptidyl transferase. The sequence is that of Elongation factor P from Bradyrhizobium sp. (strain BTAi1 / ATCC BAA-1182).